Here is a 467-residue protein sequence, read N- to C-terminus: ATP synthase subunit beta (467 aa).

154–161 (GGAGVGKT) contacts ATP.

This sequence belongs to the ATPase alpha/beta chains family. In terms of assembly, F-type ATPases have 2 components, CF(1) - the catalytic core - and CF(0) - the membrane proton channel. CF(1) has five subunits: alpha(3), beta(3), gamma(1), delta(1), epsilon(1). CF(0) has three main subunits: a(1), b(2) and c(9-12). The alpha and beta chains form an alternating ring which encloses part of the gamma chain. CF(1) is attached to CF(0) by a central stalk formed by the gamma and epsilon chains, while a peripheral stalk is formed by the delta and b chains.

The protein localises to the cell inner membrane. It catalyses the reaction ATP + H2O + 4 H(+)(in) = ADP + phosphate + 5 H(+)(out). Produces ATP from ADP in the presence of a proton gradient across the membrane. The catalytic sites are hosted primarily by the beta subunits. The protein is ATP synthase subunit beta of Leptospira borgpetersenii serovar Hardjo-bovis (strain JB197).